Reading from the N-terminus, the 129-residue chain is Protein Turandot A (129 aa).

Residues 1–21 (MNSSTALMCFALLLISPLCMG) form the signal peptide. Asparagine 49 carries N-linked (GlcNAc...) asparagine glycosylation.

This sequence belongs to the Turandot family. In terms of tissue distribution, expressed in the fat body (at protein level).

It localises to the secreted. Functionally, a humoral factor that plays a role in stress tolerance; gives increased resistance to the lethal effects of bacterial challenge and stress. Regulated by the JAK/STAT pathway and NF-KB-like Relish pathway in the fat body, upd3 in the hemocytes and Mekk1 in response to septic injury and consequent immune response. The polypeptide is Protein Turandot A (Drosophila melanogaster (Fruit fly)).